The primary structure comprises 545 residues: Luciferin 4-monooxygenase (545 aa).

Positions serine 543–leucine 545 match the Microbody targeting signal motif.

Belongs to the ATP-dependent AMP-binding enzyme family. Mg(2+) serves as cofactor.

The protein localises to the peroxisome. It carries out the reaction firefly D-luciferin + ATP + O2 = firefly oxyluciferin + hnu + AMP + CO2 + diphosphate. In terms of biological role, produces green light with a wavelength of 562 nm. The chain is Luciferin 4-monooxygenase from Photuris pensylvanica (Pennsylania firefly).